Here is a 478-residue protein sequence, read N- to C-terminus: Chromosomal replication initiator protein DnaA (478 aa).

Positions 1 to 95 are domain I, interacts with DnaA modulators; sequence MNKTLNPQEV…DVLEKEITEE (95 aa). The segment at 96–141 is domain II; the sequence is INDLVQSMEEEDFALIDHTKPVIPNFFDQNTRVNFGGGPNNHHPTT. The interval 142–358 is domain III, AAA+ region; sequence GVNPRFTFDN…GALLRIFALA (217 aa). ATP-binding residues include glycine 186, glycine 188, lysine 189, and threonine 190. A domain IV, binds dsDNA region spans residues 359 to 478; sequence SFNKEEINMT…YKLTQFILRR (120 aa).

It belongs to the DnaA family. Oligomerizes as a right-handed, spiral filament on DNA at oriC.

It localises to the cytoplasm. Its function is as follows. Plays an essential role in the initiation and regulation of chromosomal replication. ATP-DnaA binds to the origin of replication (oriC) to initiate formation of the DNA replication initiation complex once per cell cycle. Binds the DnaA box (a 9 base pair repeat at the origin) and separates the double-stranded (ds)DNA. Forms a right-handed helical filament on oriC DNA; dsDNA binds to the exterior of the filament while single-stranded (ss)DNA is stabiized in the filament's interior. The ATP-DnaA-oriC complex binds and stabilizes one strand of the AT-rich DNA unwinding element (DUE), permitting loading of DNA polymerase. After initiation quickly degrades to an ADP-DnaA complex that is not apt for DNA replication. Binds acidic phospholipids. The polypeptide is Chromosomal replication initiator protein DnaA (Tropheryma whipplei (strain TW08/27) (Whipple's bacillus)).